The following is a 585-amino-acid chain: MVSFKVSLVSTSPIDGQKPGTSGLRKKVKVFKQPNYLENFVQATFNALTTEKVKGATLVVSGDGRYYSEQAIQIIVKMAAANGVRRVWVGQNSLLSTPAVSAIIRERVGADGSKATGAFILTASHNPGGPTEDFGIKYNMENGGPAPESITDKIYENTKTIKEYPIAEDLPRVDISTIGITSFEGPEGKFDVEVFDSADDYVKLMKSIFDFESIKKLLSYPKFTFCYDALHGVAGAYAHRIFVEELGAPESSLLNCVPKEDFGGGHPDPNLTYAKELVARMGLSKTDDAGGEPPEFGAAADGDADRNMILGKRFFVTPSDSVAIIAANAVGAIPYFSSGLKGVARSMPTSAALDVVAKNLGLKFFEVPTGWKFFGNLMDAGMCSVCGEESFGTGSDHIREKDGIWAVLAWLSILAHKNKETLDGNAKLVTVEDIVRQHWATYGRHYYTRYDYENVDATAAKELMGLLVKLQSSLPEVNKIIKGIHPEVANVASADEFEYKDPVDGSVSKHQGIRYLFEDGSRLVFRLSGTGSEGATIRLYIEQYEKDASKIGRDSQDALGPLVDVALKLSKMQEFTGRSSPTVIT.

The segment at 1 to 20 (MVSFKVSLVSTSPIDGQKPG) is disordered. 2 residues coordinate alpha-D-glucose 1,6-bisphosphate: Arg-25 and Ser-124. Ser-124 functions as the Phosphoserine intermediate in the catalytic mechanism. Residues Ser-124, Asp-301, Asp-303, and Asp-305 each coordinate Mg(2+). Ser-124 is modified (phosphoserine). Alpha-D-glucose 1,6-bisphosphate contacts are provided by Asp-305, Arg-306, Thr-369, Glu-388, Ser-390, and Lys-401.

It belongs to the phosphohexose mutase family. Monomer. Mg(2+) serves as cofactor.

It is found in the cytoplasm. The enzyme catalyses alpha-D-glucose 1-phosphate = alpha-D-glucose 6-phosphate. The catalysed reaction is O-phospho-L-seryl-[protein] + alpha-D-glucose 1-phosphate = alpha-D-glucose 1,6-bisphosphate + L-seryl-[protein]. It catalyses the reaction alpha-D-glucose 1,6-bisphosphate + L-seryl-[protein] = O-phospho-L-seryl-[protein] + alpha-D-glucose 6-phosphate. Functionally, catalyzes the reversible isomerization of alpha-D-glucose 1-phosphate to alpha-D-glucose 6-phosphate. The mechanism proceeds via the intermediate compound alpha-D-glucose 1,6-bisphosphate. This enzyme participates in both the breakdown and synthesis of glucose. This chain is Probable phosphoglucomutase, cytoplasmic 2, found in Arabidopsis thaliana (Mouse-ear cress).